Here is a 101-residue protein sequence, read N- to C-terminus: DNA-binding protein Fis (101 aa).

A DNA-binding region (H-T-H motif) is located at residues 77–96 (QTRAANMLGINRGTLRKKLK).

This sequence belongs to the transcriptional regulatory Fis family. Homodimer.

Its function is as follows. Activates ribosomal RNA transcription. Plays a direct role in upstream activation of rRNA promoters. This is DNA-binding protein Fis from Shewanella frigidimarina (strain NCIMB 400).